A 101-amino-acid chain; its full sequence is MAAKLRKGDKVVVLAGRDKGKEGTIASVDPKAGKAVVDGVNMAIRHTRQTQTSQGGRLPKALPIDLSNLALLDSNGKATRVGFREEDGKKVRFAKTTGETV.

It belongs to the universal ribosomal protein uL24 family. In terms of assembly, part of the 50S ribosomal subunit.

Its function is as follows. One of two assembly initiator proteins, it binds directly to the 5'-end of the 23S rRNA, where it nucleates assembly of the 50S subunit. Functionally, one of the proteins that surrounds the polypeptide exit tunnel on the outside of the subunit. The sequence is that of Large ribosomal subunit protein uL24 from Ruegeria sp. (strain TM1040) (Silicibacter sp.).